A 336-amino-acid polypeptide reads, in one-letter code: Holliday junction branch migration complex subunit RuvB (336 aa).

The large ATPase domain (RuvB-L) stretch occupies residues 1-183 (MATERLVAGN…FGINSRLEFY (183 aa)). Residues Leu-22, Arg-23, Gly-64, Lys-67, Thr-68, Thr-69, 130–132 (EDF), Arg-173, Tyr-183, and Arg-220 contribute to the ATP site. Thr-68 provides a ligand contact to Mg(2+). The interval 184–254 (QVAELEEIIR…VAREALELLQ (71 aa)) is small ATPAse domain (RuvB-S). A head domain (RuvB-H) region spans residues 257 to 336 (AAGLDSSDRR…LGIKPEDRLF (80 aa)). DNA is bound by residues Arg-312 and Arg-317.

It belongs to the RuvB family. As to quaternary structure, homohexamer. Forms an RuvA(8)-RuvB(12)-Holliday junction (HJ) complex. HJ DNA is sandwiched between 2 RuvA tetramers; dsDNA enters through RuvA and exits via RuvB. An RuvB hexamer assembles on each DNA strand where it exits the tetramer. Each RuvB hexamer is contacted by two RuvA subunits (via domain III) on 2 adjacent RuvB subunits; this complex drives branch migration. In the full resolvosome a probable DNA-RuvA(4)-RuvB(12)-RuvC(2) complex forms which resolves the HJ.

The protein localises to the cytoplasm. The enzyme catalyses ATP + H2O = ADP + phosphate + H(+). In terms of biological role, the RuvA-RuvB-RuvC complex processes Holliday junction (HJ) DNA during genetic recombination and DNA repair, while the RuvA-RuvB complex plays an important role in the rescue of blocked DNA replication forks via replication fork reversal (RFR). RuvA specifically binds to HJ cruciform DNA, conferring on it an open structure. The RuvB hexamer acts as an ATP-dependent pump, pulling dsDNA into and through the RuvAB complex. RuvB forms 2 homohexamers on either side of HJ DNA bound by 1 or 2 RuvA tetramers; 4 subunits per hexamer contact DNA at a time. Coordinated motions by a converter formed by DNA-disengaged RuvB subunits stimulates ATP hydrolysis and nucleotide exchange. Immobilization of the converter enables RuvB to convert the ATP-contained energy into a lever motion, pulling 2 nucleotides of DNA out of the RuvA tetramer per ATP hydrolyzed, thus driving DNA branch migration. The RuvB motors rotate together with the DNA substrate, which together with the progressing nucleotide cycle form the mechanistic basis for DNA recombination by continuous HJ branch migration. Branch migration allows RuvC to scan DNA until it finds its consensus sequence, where it cleaves and resolves cruciform DNA. This chain is Holliday junction branch migration complex subunit RuvB, found in Moorella thermoacetica (strain ATCC 39073 / JCM 9320).